The chain runs to 401 residues: Argininosuccinate synthase (401 aa).

Residues 10–18 (AYSGGVDTS) and Ala-38 contribute to the ATP site. Tyr-89 serves as a coordination point for L-citrulline. Gly-119 provides a ligand contact to ATP. Residues Thr-121, Asn-125, and Asp-126 each contribute to the L-aspartate site. Asn-125 lines the L-citrulline pocket. Arg-129, Ser-177, Ser-186, Glu-262, and Tyr-274 together coordinate L-citrulline.

It belongs to the argininosuccinate synthase family. Type 1 subfamily. In terms of assembly, homotetramer.

It localises to the cytoplasm. It carries out the reaction L-citrulline + L-aspartate + ATP = 2-(N(omega)-L-arginino)succinate + AMP + diphosphate + H(+). It participates in amino-acid biosynthesis; L-arginine biosynthesis; L-arginine from L-ornithine and carbamoyl phosphate: step 2/3. The polypeptide is Argininosuccinate synthase (Microcystis aeruginosa (strain NIES-843 / IAM M-2473)).